A 317-amino-acid polypeptide reads, in one-letter code: MNNWNSITIKISREAGEAISALLIEAGSAGVEINDSADYLNHEDQFGEVLPEIEQSDFVEITAYYPENMPIVELKAEIEHKIANLSDYFSLTGLSVTTNNLSETNWAEAWKKYFEPARITHDLTIVPSWTEDYVATGSEKLIRLDPGMAFGTGTHPTTKMSLYALEQVLRGGETLLDVGTGSGVLSVAASYLGAAEIFAYDIDEVAVRVALENIELNPGHEKIHVSANNLLEGIDKKADVIVANILADILVLMTEDAFRLVKEEGYLIMSGIIADKADMVIASAEKAGFFLETRMIQGEWNCLIFKKTENREGVIGG.

4 residues coordinate S-adenosyl-L-methionine: Thr-158, Gly-179, Asp-201, and Asn-244.

The protein belongs to the methyltransferase superfamily. PrmA family.

It localises to the cytoplasm. It catalyses the reaction L-lysyl-[protein] + 3 S-adenosyl-L-methionine = N(6),N(6),N(6)-trimethyl-L-lysyl-[protein] + 3 S-adenosyl-L-homocysteine + 3 H(+). Methylates ribosomal protein L11. The polypeptide is Ribosomal protein L11 methyltransferase (Lactococcus lactis subsp. lactis (strain IL1403) (Streptococcus lactis)).